The primary structure comprises 285 residues: Small ribosomal subunit biogenesis GTPase RsgA (285 aa).

A CP-type G domain is found at 61 to 215 (KNQLIRPKVA…IIDSPGFSSF (155 aa)). GTP contacts are provided by residues 110 to 113 (TKID) and 159 to 167 (GQTGVGKTS). Zn(2+) contacts are provided by cysteine 239, cysteine 244, histidine 246, and cysteine 254.

The protein belongs to the TRAFAC class YlqF/YawG GTPase family. RsgA subfamily. Monomer. Associates with 30S ribosomal subunit, binds 16S rRNA. The cofactor is Zn(2+).

Its subcellular location is the cytoplasm. In terms of biological role, one of several proteins that assist in the late maturation steps of the functional core of the 30S ribosomal subunit. Helps release RbfA from mature subunits. May play a role in the assembly of ribosomal proteins into the subunit. Circularly permuted GTPase that catalyzes slow GTP hydrolysis, GTPase activity is stimulated by the 30S ribosomal subunit. In Mesomycoplasma hyopneumoniae (strain 7448) (Mycoplasma hyopneumoniae), this protein is Small ribosomal subunit biogenesis GTPase RsgA.